The chain runs to 402 residues: ORC1-type DNA replication protein 17 (402 aa).

Residues Tyr-223 and Arg-235 each coordinate ATP.

This sequence belongs to the CDC6/cdc18 family.

In terms of biological role, involved in regulation of DNA replication. The sequence is that of ORC1-type DNA replication protein 17 (cdc6q) from Haloarcula marismortui (strain ATCC 43049 / DSM 3752 / JCM 8966 / VKM B-1809) (Halobacterium marismortui).